Reading from the N-terminus, the 1184-residue chain is Calcium-activated potassium channel subunit alpha-1a (1184 aa).

Topologically, residues 1 to 39 (MSNNINFNKNPDSSVSISKMDVIIPFTPDVPCDNNGQRM) are extracellular. Residues 40-60 (WWAFLASSMVTFFGGLFIILL) form a helical membrane-spanning segment. Over 61–132 (WRTLKYLWTV…MISAQTLTGR (72 aa)) the chain is Cytoplasmic. Residues C71, C72, and C74 are each lipidated (S-palmitoyl cysteine). Residues 133–153 (VLVVLVFALSIGALGIYFIDS) traverse the membrane as a helical segment. Topologically, residues 154 to 168 (SDPIESCQNFYKDFT) are extracellular. A helical membrane pass occupies residues 169–189 (LQIDMAFNVFFLLYFGLRFIA). Topologically, residues 190-193 (ANDK) are cytoplasmic. A helical membrane pass occupies residues 194-214 (LWFWLEVNSVVDFFTVPPVFV). At 215–254 (SVYLNRSWLGLRFLRALRLIQFSEILQFLNILKTSNSIKL) the chain is on the extracellular side. A helical transmembrane segment spans residues 255 to 275 (VNLCSIFISTWLTAAGFIHLV). Topologically, residues 276 to 289 (ENSGDPWENFQNSQ) are cytoplasmic. A helical transmembrane segment spans residues 290-310 (PLSYWECVYLLMVTMSTVGYG). The Extracellular portion of the chain corresponds to 311–321 (DVYARTTLGRL). Residues 322-342 (FMVFFILGGLAMFASYVPEII) form a helical membrane-spanning segment. Residues 343-1184 (ELIGNRKKYG…PPIREVEDEC (842 aa)) lie on the Cytoplasmic side of the membrane. Positions 361 to 503 (RKHIVVCGHI…WNWKEGDDAI (143 aa)) constitute an RCK N-terminal 1 domain. 3 residues coordinate Mg(2+): E393, Q416, and E418. N468 serves as a coordination point for Ca(2+). The interval 655–677 (EHPSTLSPKKKQRNGGMRNSPNC) is disordered. T659 carries the post-translational modification Phosphothreonine. 3 positions are modified to phosphoserine: S661, S674, and S678. Residues 735–879 (SGHVVVCIFG…MDRSSPDNSP (145 aa)) form the RCK N-terminal 2 domain. Position 866 is a phosphothreonine (T866). A phosphoserine mark is found at S874 and S878. Positions 908, 911, 914, and 916 each coordinate Ca(2+). Positions 908–916 (QFLDQDDDD) match the Calcium bowl motif. The interval 1082–1143 (RASLSHSSHS…PEKRWFTDEA (62 aa)) is disordered. The segment covering 1084-1104 (SLSHSSHSSHSSSKKSSSVHS) has biased composition (low complexity). The span at 1116-1125 (KAREARDKQN) shows a compositional bias: basic and acidic residues.

The protein belongs to the potassium channel family. Calcium-activated (TC 1.A.1.3) subfamily. KCa1.1/KCNMA1 sub-subfamily. In terms of assembly, homotetramer; which constitutes the calcium-activated potassium channel. Phosphorylated. Post-translationally, palmitoylated.

It is found in the cell membrane. It carries out the reaction K(+)(in) = K(+)(out). Functionally, potassium channel activated by both membrane depolarization or increase in cytosolic Ca(2+) that mediates export of K(+). It is also activated by the concentration of cytosolic Mg(2+). Its activation dampens the excitatory events that elevate the cytosolic Ca(2+) concentration and/or depolarize the cell membrane. It therefore contributes to repolarization of the membrane potential. Involved in determining peripheral auditory sensitivity. The polypeptide is Calcium-activated potassium channel subunit alpha-1a (Danio rerio (Zebrafish)).